A 415-amino-acid chain; its full sequence is Gamma-glutamyl phosphate reductase (415 aa).

This sequence belongs to the gamma-glutamyl phosphate reductase family.

The protein resides in the cytoplasm. The catalysed reaction is L-glutamate 5-semialdehyde + phosphate + NADP(+) = L-glutamyl 5-phosphate + NADPH + H(+). It participates in amino-acid biosynthesis; L-proline biosynthesis; L-glutamate 5-semialdehyde from L-glutamate: step 2/2. In terms of biological role, catalyzes the NADPH-dependent reduction of L-glutamate 5-phosphate into L-glutamate 5-semialdehyde and phosphate. The product spontaneously undergoes cyclization to form 1-pyrroline-5-carboxylate. The chain is Gamma-glutamyl phosphate reductase from Dictyoglomus turgidum (strain DSM 6724 / Z-1310).